Here is a 172-residue protein sequence, read N- to C-terminus: Large ribosomal subunit protein uL10 (172 aa).

This sequence belongs to the universal ribosomal protein uL10 family. In terms of assembly, part of the ribosomal stalk of the 50S ribosomal subunit. The N-terminus interacts with L11 and the large rRNA to form the base of the stalk. The C-terminus forms an elongated spine to which L12 dimers bind in a sequential fashion forming a multimeric L10(L12)X complex.

Its function is as follows. Forms part of the ribosomal stalk, playing a central role in the interaction of the ribosome with GTP-bound translation factors. The chain is Large ribosomal subunit protein uL10 from Rhodopseudomonas palustris (strain TIE-1).